The primary structure comprises 484 residues: Pheophytinase, chloroplastic (484 aa).

The N-terminal 47 residues, 1-47, are a transit peptide targeting the chloroplast; the sequence is MEIISLNVVPQCSVVTWSSKLATKRLVPNRSSLLFSGVKKSRLVIRS.

Belongs to the AB hydrolase superfamily. As to quaternary structure, interacts with HCAR, RCCR, PAO and the LHCII complex. Part of a SGR1-CCE-LHCII complex, which acts in chlorophyll breakdown.

It localises to the plastid. Its subcellular location is the chloroplast thylakoid membrane. The protein localises to the chloroplast stroma. Alpha/beta hydrolase dephytylating specifically the Mg-free chlorophyll pigment (pheophytin), yielding pheophorbide. No activity on chlorophyll. Belongs to the chlorophyll catabolic enzymes (CCEs). This Arabidopsis thaliana (Mouse-ear cress) protein is Pheophytinase, chloroplastic (PPH).